The chain runs to 328 residues: uncharacterized protein (328 aa).

It to the C-terminal of para-aminobenzoate synthase component I.

This is an uncharacterized protein from Haemophilus influenzae (strain ATCC 51907 / DSM 11121 / KW20 / Rd).